The primary structure comprises 312 residues: Zinc finger protein 414 (312 aa).

Residues 1–110 (MEEKPSGPIP…RRPPPGKQIP (110 aa)) are disordered. A compositionally biased stretch (low complexity) spans 29–48 (SPAVPAAAPSSSMSEEPGPE). Over residues 84–93 (GLTSIVSGTS) the composition is skewed to polar residues. 3 consecutive C2H2-type zinc fingers follow at residues 109-133 (IPCS…LRTH), 145-169 (FRCS…SKLH), and 176-201 (FKCE…CAEH). Positions 203 to 312 (QSPAPPPPPA…GSDAPSGACR (110 aa)) are disordered. Positions 213 to 225 (LDREPPAPERPPE) are enriched in basic and acidic residues. 2 stretches are compositionally biased toward low complexity: residues 227–243 (DPAS…EPFT) and 265–285 (SPPR…SSAA).

This sequence belongs to the krueppel C2H2-type zinc-finger protein family.

Its subcellular location is the nucleus. Functionally, may be involved in transcriptional regulation. This is Zinc finger protein 414 (ZNF414) from Homo sapiens (Human).